A 158-amino-acid polypeptide reads, in one-letter code: Phosphopantetheine adenylyltransferase (158 aa).

Position 9 (Ser-9) interacts with substrate. ATP contacts are provided by residues 9–10 (SF) and His-17. 3 residues coordinate substrate: Lys-41, Val-73, and Lys-87. ATP contacts are provided by residues 88–90 (GLR), Glu-98, and 122–128 (YSFVSSS).

This sequence belongs to the bacterial CoaD family. As to quaternary structure, homohexamer. Mg(2+) is required as a cofactor.

It localises to the cytoplasm. The catalysed reaction is (R)-4'-phosphopantetheine + ATP + H(+) = 3'-dephospho-CoA + diphosphate. It participates in cofactor biosynthesis; coenzyme A biosynthesis; CoA from (R)-pantothenate: step 4/5. Its function is as follows. Reversibly transfers an adenylyl group from ATP to 4'-phosphopantetheine, yielding dephospho-CoA (dPCoA) and pyrophosphate. The protein is Phosphopantetheine adenylyltransferase of Mycolicibacterium smegmatis (strain ATCC 700084 / mc(2)155) (Mycobacterium smegmatis).